Consider the following 426-residue polypeptide: SrfA-induced gene K protein (426 aa).

Residues 1-23 form the signal peptide; the sequence is MKKMKILSFFILSLAIIIGIVYS. N64, N136, N160, and N226 each carry an N-linked (GlcNAc...) asparagine glycan. Laminin EGF-like domains are found at residues 325–348 and 384–408; these read DNQC…GMVL and CNGT…GGEV. 3 cysteine pairs are disulfide-bonded: C330-C339, C342-C358, and C370-C388. N-linked (GlcNAc...) asparagine glycosylation occurs at N385.

The chain is SrfA-induced gene K protein (sigK) from Dictyostelium discoideum (Social amoeba).